Reading from the N-terminus, the 329-residue chain is Putative helicase 109L (329 aa).

Residues 105–259 enclose the Helicase ATP-binding domain; it reads LTLLTQHKSC…LFDMFFGPEM (155 aa). 118–125 is a binding site for ATP; the sequence is CYTGFGKT. The DEAH box signature appears at 212 to 215; that stretch reads DEAH.

The protein belongs to the DEAD box helicase family. DEAH subfamily.

The polypeptide is Putative helicase 109L (Invertebrate iridescent virus 3 (IIV-3)).